Reading from the N-terminus, the 423-residue chain is MSDRFEATYLIETPHDVASVAQELAGEQSTATSSRMPGETDALIRDFGARVEHIEALPPAEAPSLPVAHTLGQRVHRARLTLSWPLHNIGDSLPMLLTTLLGNQTGMRRLSGIRLERVAMPQSFIAAQPRPAFGIAGTRRLTGVQGRPLIGSIVKPNIGLAPEQTAAMARQLAEGGVDFIKDDELLANPPYSPVARRAALVLRALDEAAQRTGRRTMYAVNITDGLDEMRRHHDAVVQAGGTCIMVNLNSVGLSALLALRRHSQLPIHGHRAGWAMMTRCPALGMEFQPYQMLHRLAGVDHLHVSGLGGKFWEHADSVLQAAHECLTPLDTQAGAADDRALPVFSGGSTIFDVAPTYQGIGTADLIFASGGGIFGHPDGLAAGCASLRQAWEAAIAGQELRAYAQSRPELAAALARGKPVRKA.

K181, D183, and E184 together coordinate Mg(2+). K181 carries the post-translational modification N6-carboxylysine.

This sequence belongs to the RuBisCO large chain family. Type IV subfamily. Requires Mg(2+) as cofactor.

In terms of biological role, may be involved in sulfur metabolism and oxidative stress response. Does not show RuBisCO activity. This is an uncharacterized protein from Bordetella bronchiseptica (strain ATCC BAA-588 / NCTC 13252 / RB50) (Alcaligenes bronchisepticus).